Consider the following 89-residue polypeptide: Small ribosomal subunit protein uS14A (89 aa).

It belongs to the universal ribosomal protein uS14 family. In terms of assembly, contacts proteins S3 and S10. Part of the 30S ribosomal subunit.

Binds 16S rRNA, required for the assembly of 30S particles and may also be responsible for determining the conformation of the 16S rRNA at the A site. Functionally, non-essential protein. A second form of uS14, it can integrate into the 30S subunit where it partially compensates for loss of the major uS14 protein (AC P12878) in restoring 70S formation, although it does not seem to be incorporated into the ribosome as well as the major uS14. The protein is Small ribosomal subunit protein uS14A of Bacillus subtilis (strain 168).